The following is a 166-amino-acid chain: UPF0336 protein Mb0656 (166 aa).

Belongs to the UPF0336 family.

The polypeptide is UPF0336 protein Mb0656 (Mycobacterium bovis (strain ATCC BAA-935 / AF2122/97)).